The primary structure comprises 157 residues: Protein BeeE (157 aa).

It belongs to the phage portal family.

The polypeptide is Protein BeeE (beeE) (Escherichia coli (strain K12)).